The following is a 245-amino-acid chain: Carboxymethylenebutenolidase homolog (245 aa).

At Ala2 the chain carries N-acetylalanine. Lys36 carries the post-translational modification N6-acetyllysine. Residues Cys132, Asp179, and His212 contribute to the active site. At Ser223 the chain carries Phosphoserine.

It belongs to the dienelactone hydrolase family.

Its subcellular location is the cytoplasm. It is found in the cytosol. Cysteine hydrolase. This Pongo abelii (Sumatran orangutan) protein is Carboxymethylenebutenolidase homolog (CMBL).